The following is a 281-amino-acid chain: Pantothenate synthetase (281 aa).

30-37 (MGYLHEGH) contributes to the ATP binding site. The active-site Proton donor is His37. Gln61 contacts (R)-pantoate. Position 61 (Gln61) interacts with beta-alanine. Residue 147–150 (GEKD) participates in ATP binding. Position 153 (Gln153) interacts with (R)-pantoate. ATP is bound by residues Val176 and 184–187 (MSSR).

Belongs to the pantothenate synthetase family. In terms of assembly, homodimer.

The protein resides in the cytoplasm. It catalyses the reaction (R)-pantoate + beta-alanine + ATP = (R)-pantothenate + AMP + diphosphate + H(+). It participates in cofactor biosynthesis; (R)-pantothenate biosynthesis; (R)-pantothenate from (R)-pantoate and beta-alanine: step 1/1. Functionally, catalyzes the condensation of pantoate with beta-alanine in an ATP-dependent reaction via a pantoyl-adenylate intermediate. This is Pantothenate synthetase from Desulfatibacillum aliphaticivorans.